We begin with the raw amino-acid sequence, 373 residues long: Alanine racemase (373 aa).

Lysine 40 functions as the Proton acceptor; specific for D-alanine in the catalytic mechanism. Lysine 40 carries the N6-(pyridoxal phosphate)lysine modification. Substrate is bound at residue arginine 140. The Proton acceptor; specific for L-alanine role is filled by tyrosine 268. Position 315 (methionine 315) interacts with substrate.

The protein belongs to the alanine racemase family. It depends on pyridoxal 5'-phosphate as a cofactor.

It catalyses the reaction L-alanine = D-alanine. It functions in the pathway amino-acid biosynthesis; D-alanine biosynthesis; D-alanine from L-alanine: step 1/1. Its function is as follows. Catalyzes the interconversion of L-alanine and D-alanine. May also act on other amino acids. This chain is Alanine racemase (alr), found in Limosilactobacillus fermentum (strain NBRC 3956 / LMG 18251) (Lactobacillus fermentum).